Consider the following 320-residue polypeptide: Peroxidase 66 (320 aa).

A signal peptide spans 1–29 (MAASVSASCLNRLSSLAVVLVALASAASA). Residue Q30 is modified to Pyrrolidone carboxylic acid. Intrachain disulfides connect C40–C118, C73–C78, C124–C315, and C202–C227. The active-site Proton acceptor is H71. The Ca(2+) site is built by D72, V75, G77, D79, and S81. N-linked (GlcNAc...) asparagine glycans are attached at residues N85 and N96. Position 165 (P165) interacts with substrate. Residue H195 coordinates heme b. T196 is a binding site for Ca(2+). Residue N211 is glycosylated (N-linked (GlcNAc...) asparagine). Residues D239, T242, and D247 each coordinate Ca(2+).

The protein belongs to the peroxidase family. Classical plant (class III) peroxidase subfamily. Heme b is required as a cofactor. Requires Ca(2+) as cofactor.

Its subcellular location is the secreted. It catalyses the reaction 2 a phenolic donor + H2O2 = 2 a phenolic radical donor + 2 H2O. Removal of H(2)O(2), oxidation of toxic reductants, biosynthesis and degradation of lignin, suberization, auxin catabolism, response to environmental stresses such as wounding, pathogen attack and oxidative stress. These functions might be dependent on each isozyme/isoform in each plant tissue. The sequence is that of Peroxidase 66 (PER66) from Zea mays (Maize).